We begin with the raw amino-acid sequence, 87 residues long: Selenoprotein W (87 aa).

A cross-link (cysteinyl-selenocysteine (Cys-Sec); redox-active) is located at residues 10 to 13 (CGAU). Selenocysteine 13 is a non-standard amino acid (selenocysteine). The residue at position 37 (cysteine 37) is an S-glutathionyl cysteine.

The protein belongs to the SelWTH family. Selenoprotein W subfamily. Interacts with DPYSL2, PRDX1, YWHAB, YWHAG, HSP70 and HSP90. Highest levels detected in skeletal muscle, tongue, heart and brain. Expressed at significantly higher levels in female skeletal muscle than in male and at slightly higher levels in female cardiac muscle than in male (at protein level). Also detected at low levels in liver.

Its subcellular location is the cytoplasm. Its function is as follows. Plays a role as a glutathione (GSH)-dependent antioxidant. May be involved in a redox-related process. May play a role in the myopathies of selenium deficiency. The chain is Selenoprotein W from Macaca mulatta (Rhesus macaque).